The sequence spans 338 residues: 1-aminocyclopropane-1-carboxylate deaminase (338 aa).

K51 is subject to N6-(pyridoxal phosphate)lysine. S78 serves as the catalytic Nucleophile.

The protein belongs to the ACC deaminase/D-cysteine desulfhydrase family. Homotrimer. It depends on pyridoxal 5'-phosphate as a cofactor.

It catalyses the reaction 1-aminocyclopropane-1-carboxylate + H2O = 2-oxobutanoate + NH4(+). Its function is as follows. Catalyzes a cyclopropane ring-opening reaction, the irreversible conversion of 1-aminocyclopropane-1-carboxylate (ACC) to ammonia and alpha-ketobutyrate. Allows growth on ACC as a nitrogen source. The protein is 1-aminocyclopropane-1-carboxylate deaminase of Pseudomonas putida (Arthrobacter siderocapsulatus).